A 218-amino-acid chain; its full sequence is uncharacterized protein (218 aa).

The chain crosses the membrane as a helical span at residues 11-31 (AAGLFPLALMLSGCISYALVS).

It localises to the membrane. This is an uncharacterized protein from Escherichia coli (strain K12).